The following is a 228-amino-acid chain: MRRGEVLKLGVVPYLEGKEIQLKAFEKVKKEETDGILILLQHKPVYTIGVSGGYDEDILVPIDYIKEKAELYKVERGGKITFHGPGQVVAYPIFNLAKWQKDVHLFVHNLEEAVIRLLREYGIIAGRKEKYTGVWVGDEKICAIGIAVKRWITWHGIALNVNTDLSYFGLINACGITEFGVTSMKKLGIEVEIEEVMDRLVDKFEEVFEIKFEEIDLTRLAVVDSAKA.

Positions 31-212 constitute a BPL/LPL catalytic domain; sequence EETDGILILL…KFEEVFEIKF (182 aa). Substrate-binding positions include 76-83, 143-145, and 156-158; these read RGGKITFH, AIG, and GIA. Cys174 (acyl-thioester intermediate) is an active-site residue.

It belongs to the LipB family.

It localises to the cytoplasm. The catalysed reaction is octanoyl-[ACP] + L-lysyl-[protein] = N(6)-octanoyl-L-lysyl-[protein] + holo-[ACP] + H(+). It participates in protein modification; protein lipoylation via endogenous pathway; protein N(6)-(lipoyl)lysine from octanoyl-[acyl-carrier-protein]: step 1/2. Functionally, catalyzes the transfer of endogenously produced octanoic acid from octanoyl-acyl-carrier-protein onto the lipoyl domains of lipoate-dependent enzymes. Lipoyl-ACP can also act as a substrate although octanoyl-ACP is likely to be the physiological substrate. This is Octanoyltransferase from Caldanaerobacter subterraneus subsp. tengcongensis (strain DSM 15242 / JCM 11007 / NBRC 100824 / MB4) (Thermoanaerobacter tengcongensis).